The primary structure comprises 422 residues: Serine--tRNA ligase (422 aa).

229–231 (TAE) contacts L-serine. ATP-binding positions include 260–262 (RRE) and Val276. Residue Glu283 coordinates L-serine. Position 349–352 (349–352 (EVTS)) interacts with ATP. Thr384 contacts L-serine.

Belongs to the class-II aminoacyl-tRNA synthetase family. Type-1 seryl-tRNA synthetase subfamily. In terms of assembly, homodimer. The tRNA molecule binds across the dimer.

It localises to the cytoplasm. It catalyses the reaction tRNA(Ser) + L-serine + ATP = L-seryl-tRNA(Ser) + AMP + diphosphate + H(+). The catalysed reaction is tRNA(Sec) + L-serine + ATP = L-seryl-tRNA(Sec) + AMP + diphosphate + H(+). It participates in aminoacyl-tRNA biosynthesis; selenocysteinyl-tRNA(Sec) biosynthesis; L-seryl-tRNA(Sec) from L-serine and tRNA(Sec): step 1/1. In terms of biological role, catalyzes the attachment of serine to tRNA(Ser). Is also able to aminoacylate tRNA(Sec) with serine, to form the misacylated tRNA L-seryl-tRNA(Sec), which will be further converted into selenocysteinyl-tRNA(Sec). The protein is Serine--tRNA ligase of Treponema denticola (strain ATCC 35405 / DSM 14222 / CIP 103919 / JCM 8153 / KCTC 15104).